The primary structure comprises 338 residues: Glyceraldehyde-3-phosphate dehydrogenase 1 (338 aa).

NAD(+) contacts are provided by residues 13–14 (TI) and glycine 111. 140 to 142 (SCN) contributes to the D-glyceraldehyde 3-phosphate binding site. Cysteine 141 acts as the Nucleophile in catalysis. Residue arginine 169 participates in NAD(+) binding. 195–196 (HG) lines the D-glyceraldehyde 3-phosphate pocket. An NAD(+)-binding site is contributed by glutamine 300.

Belongs to the glyceraldehyde-3-phosphate dehydrogenase family. Homotetramer.

It localises to the cytoplasm. It catalyses the reaction D-glyceraldehyde 3-phosphate + phosphate + NADP(+) = (2R)-3-phospho-glyceroyl phosphate + NADPH + H(+). The catalysed reaction is D-glyceraldehyde 3-phosphate + phosphate + NAD(+) = (2R)-3-phospho-glyceroyl phosphate + NADH + H(+). Its pathway is carbohydrate degradation; glycolysis; pyruvate from D-glyceraldehyde 3-phosphate: step 1/5. The sequence is that of Glyceraldehyde-3-phosphate dehydrogenase 1 from Methanosarcina barkeri (strain Fusaro / DSM 804).